Reading from the N-terminus, the 361-residue chain is 5-formaminoimidazole-4-carboxamide-1-(beta)-D-ribofuranosyl 5'-monophosphate synthetase (361 aa).

Histidine 27 and serine 94 together coordinate 5-amino-1-(5-phospho-beta-D-ribosyl)imidazole-4-carboxamide. Positions 116 to 348 constitute an ATP-grasp domain; it reads RRILRWESER…MGQRIAREIK (233 aa). ATP contacts are provided by residues 156–166, 199–202, and glutamate 230; these read KFPGARGGRGY and EEYV. Asparagine 258 contributes to the 5-amino-1-(5-phospho-beta-D-ribosyl)imidazole-4-carboxamide binding site. Positions 297 and 310 each coordinate Mg(2+).

It belongs to the phosphohexose mutase family. As to quaternary structure, homohexamer. Dimer of trimers. The cofactor is Mg(2+). Mn(2+) is required as a cofactor.

The enzyme catalyses 5-amino-1-(5-phospho-beta-D-ribosyl)imidazole-4-carboxamide + formate + ATP = 5-formamido-1-(5-phospho-D-ribosyl)imidazole-4-carboxamide + ADP + phosphate. It functions in the pathway purine metabolism; IMP biosynthesis via de novo pathway; 5-formamido-1-(5-phospho-D-ribosyl)imidazole-4-carboxamide from 5-amino-1-(5-phospho-D-ribosyl)imidazole-4-carboxamide (formate route): step 1/1. With respect to regulation, inhibited by ADP. Catalyzes the ATP- and formate-dependent formylation of 5-aminoimidazole-4-carboxamide-1-beta-d-ribofuranosyl 5'-monophosphate (AICAR) to 5-formaminoimidazole-4-carboxamide-1-beta-d-ribofuranosyl 5'-monophosphate (FAICAR) in the absence of folates. This Methanocaldococcus jannaschii (strain ATCC 43067 / DSM 2661 / JAL-1 / JCM 10045 / NBRC 100440) (Methanococcus jannaschii) protein is 5-formaminoimidazole-4-carboxamide-1-(beta)-D-ribofuranosyl 5'-monophosphate synthetase.